Consider the following 281-residue polypeptide: Ribosomal RNA small subunit methyltransferase A (281 aa).

Residues H25, L27, G52, E74, D100, and N119 each coordinate S-adenosyl-L-methionine.

This sequence belongs to the class I-like SAM-binding methyltransferase superfamily. rRNA adenine N(6)-methyltransferase family. RsmA subfamily.

It is found in the cytoplasm. The catalysed reaction is adenosine(1518)/adenosine(1519) in 16S rRNA + 4 S-adenosyl-L-methionine = N(6)-dimethyladenosine(1518)/N(6)-dimethyladenosine(1519) in 16S rRNA + 4 S-adenosyl-L-homocysteine + 4 H(+). Its function is as follows. Specifically dimethylates two adjacent adenosines (A1518 and A1519) in the loop of a conserved hairpin near the 3'-end of 16S rRNA in the 30S particle. May play a critical role in biogenesis of 30S subunits. The protein is Ribosomal RNA small subunit methyltransferase A of Paramagnetospirillum magneticum (strain ATCC 700264 / AMB-1) (Magnetospirillum magneticum).